A 180-amino-acid polypeptide reads, in one-letter code: Chromosome-anchoring protein RacA (180 aa).

A DNA-binding region (H-T-H motif) is located at residues 5-25; the sequence is TPFIAKKLGVSPKAVVRIAQQ. The stretch at 90–150 forms a coiled coil; that stretch reads HDFEQLAAQL…KLEAGLKKEE (61 aa).

This sequence belongs to the RacA family.

The protein resides in the cytoplasm. Its function is as follows. Required for the formation of axial filaments and for anchoring the origin regions at the cell poles in sporulating cells, thus ensuring proper chromosome segregation in the prespore. Binds in a dispersed manner throughout the chromosome but preferentially to sites clustered in the origin portion of the chromosome, causing condensation of the chromosome and its remodeling into an elongated, anchored structure. This chain is Chromosome-anchoring protein RacA, found in Bacillus anthracis (strain A0248).